Here is a 410-residue protein sequence, read N- to C-terminus: Exodeoxyribonuclease 7 large subunit (410 aa).

The protein belongs to the XseA family. As to quaternary structure, heterooligomer composed of large and small subunits.

Its subcellular location is the cytoplasm. The catalysed reaction is Exonucleolytic cleavage in either 5'- to 3'- or 3'- to 5'-direction to yield nucleoside 5'-phosphates.. Bidirectionally degrades single-stranded DNA into large acid-insoluble oligonucleotides, which are then degraded further into small acid-soluble oligonucleotides. This Alkaliphilus metalliredigens (strain QYMF) protein is Exodeoxyribonuclease 7 large subunit.